The primary structure comprises 151 residues: Arginine repressor (151 aa).

The protein belongs to the ArgR family.

Its subcellular location is the cytoplasm. Its pathway is amino-acid biosynthesis; L-arginine biosynthesis [regulation]. Its function is as follows. Regulates arginine biosynthesis genes. This is Arginine repressor from Clostridium novyi (strain NT).